We begin with the raw amino-acid sequence, 125 residues long: Glycine cleavage system H protein (125 aa).

Positions 21-103 (SVTIGISNQA…YSAGWIVKIK (83 aa)) constitute a Lipoyl-binding domain. The residue at position 62 (Lys62) is an N6-lipoyllysine.

It belongs to the GcvH family. As to quaternary structure, the glycine cleavage system is composed of four proteins: P, T, L and H. It depends on (R)-lipoate as a cofactor.

The glycine cleavage system catalyzes the degradation of glycine. The H protein shuttles the methylamine group of glycine from the P protein to the T protein. This is Glycine cleavage system H protein from Psychromonas ingrahamii (strain DSM 17664 / CCUG 51855 / 37).